Here is a 587-residue protein sequence, read N- to C-terminus: Chaperonin GroEL 1 (587 aa).

Residues 29-32 (TIGP), 86-90 (DGTTT), Gly-413, and Asp-492 each bind ATP.

Belongs to the chaperonin (HSP60) family. As to quaternary structure, forms a cylinder of 14 subunits composed of two heptameric rings stacked back-to-back. Interacts with the co-chaperonin GroES.

The protein localises to the cytoplasm. The enzyme catalyses ATP + H2O + a folded polypeptide = ADP + phosphate + an unfolded polypeptide.. In terms of biological role, together with its co-chaperonin GroES, plays an essential role in assisting protein folding. The GroEL-GroES system forms a nano-cage that allows encapsulation of the non-native substrate proteins and provides a physical environment optimized to promote and accelerate protein folding. This is Chaperonin GroEL 1 from Prochlorococcus marinus (strain MIT 9515).